Here is a 37-residue protein sequence, read N- to C-terminus: uncharacterized protein (37 aa).

Residues Thr-13–Leu-33 traverse the membrane as a helical segment.

It localises to the host membrane. This is an uncharacterized protein from Acidianus convivator (ABV).